We begin with the raw amino-acid sequence, 146 residues long: MVMGLGLFLLVFMLGLGLTPPTLAQDNSRYRDFLAKHYDATPQGRNDRYCESTMRRRHLTSPCKDINTFIHGNRHHIKAICGDENGNPYGENLRISKSPFQVTTCNLRGGSPRPPCQYRATRGSRNIVVGCENGLPVHLDESIFRP.

Residues 1–24 form the signal peptide; the sequence is MVMGLGLFLLVFMLGLGLTPPTLA. Q25 carries the pyrrolidone carboxylic acid modification. H37 serves as the catalytic Proton acceptor. Residue R45 coordinates tRNA. Cystine bridges form between C50–C105, C63–C116, and C81–C131. The short motif at 55–59 is the Nucleolar localization signal element; it reads RRRHL. TRNA-binding residues include C105 and I127. Residue H138 is the Proton donor of the active site.

The protein belongs to the pancreatic ribonuclease family. Homodimer. Interacts with RNH1; inhibiting ANG ribonuclease activity. Interacts with PCNA.

The protein localises to the secreted. It localises to the nucleus. Its subcellular location is the nucleolus. The protein resides in the cytoplasm. It is found in the stress granule. Has weak tRNA ribonuclease activity by itself due to partial autoinhibition by its C-terminus, which folds into a short alpha-helix that partially occludes the substrate-binding site. In absence of stress, the ribonuclease activity is inhibited by RNH1 in the cytoplasm. In response to stress, dissociates from RNH1 in the cytoplasm and associates with cytoplasmic ribosomes with vacant A-sites: ribosomes directly activate the tRNA ribonuclease activity of ANG by refolding the C-terminal alpha-helix. In response to stress, the angiogenic activity of ANG is inhibited by RNH1 in the nucleus. Functionally, secreted ribonuclease that can either promote or restrict cell proliferation of target cells, depending on the context. Endocytosed in target cells via its receptor PLXNB2 and translocates to the cytoplasm or nucleus. Under stress conditions, localizes to the cytoplasm and promotes the assembly of stress granules (SGs): specifically cleaves a subset of tRNAs within anticodon loops to produce tRNA-derived stress-induced fragments (tiRNAs), resulting in translation repression and inhibition of cell proliferation. tiRNas also prevent formation of apoptosome, thereby promoting cell survival. Preferentially cleaves RNAs between a pyrimidine and an adenosine residue, suggesting that it cleaves the anticodon loop of tRNA(Ala) (32-UUAGCAU-38) after positions 33 and 36. Cleaves a subset of tRNAs, including tRNA(Ala), tRNA(Glu), tRNA(Gly), tRNA(Lys), tRNA(Val), tRNA(His), tRNA(Asp) and tRNA(Sec). Under growth conditions and in differentiated cells, translocates to the nucleus and stimulates ribosomal RNA (rRNA) transcription, including that containing the initiation site sequences of 45S rRNA, thereby promoting cell growth and proliferation. Angiogenin induces vascularization of normal and malignant tissues via its ability to promote rRNA transcription. Involved in hematopoietic stem and progenitor cell (HSPC) growth and survival by promoting rRNA transcription in growth conditions and inhibiting translation in response to stress, respectively. Mediates the crosstalk between myeloid and intestinal epithelial cells to protect the intestinal epithelial barrier integrity: secreted by myeloid cells and promotes intestinal epithelial cells proliferation and survival. Also mediates osteoclast-endothelial cell crosstalk in growing bone: produced by osteoclasts and protects the neighboring vascular cells against senescence by promoting rRNA transcription. The sequence is that of Angiogenin (ANG) from Chlorocebus aethiops (Green monkey).